The chain runs to 212 residues: Ribosomal RNA large subunit methyltransferase E (212 aa).

Residues glycine 57, tryptophan 59, aspartate 77, aspartate 93, and aspartate 122 each contribute to the S-adenosyl-L-methionine site. The active-site Proton acceptor is lysine 162.

The protein belongs to the class I-like SAM-binding methyltransferase superfamily. RNA methyltransferase RlmE family.

Its subcellular location is the cytoplasm. The enzyme catalyses uridine(2552) in 23S rRNA + S-adenosyl-L-methionine = 2'-O-methyluridine(2552) in 23S rRNA + S-adenosyl-L-homocysteine + H(+). Specifically methylates the uridine in position 2552 of 23S rRNA at the 2'-O position of the ribose in the fully assembled 50S ribosomal subunit. The sequence is that of Ribosomal RNA large subunit methyltransferase E from Coxiella burnetii (strain RSA 331 / Henzerling II).